A 169-amino-acid polypeptide reads, in one-letter code: Anaerobic nitrite reductase NSHB2 (169 aa).

A Globin domain is found at 16 to 166 (SFSEEQEALV…LVAAIKQEMK (151 aa)). The Homodimerization signature appears at 49 to 53 (EVAPS). Residues Ser59, Lys73, His77, Arg107, Thr111, and His112 each coordinate heme b. Positions 119-131 (DAHFEVTRFALLE) match the Homodimerization motif.

This sequence belongs to the plant globin family. Homodimer. Heme b serves as cofactor. As to expression, expressed in leaves, but not in roots. Present in embryonic organs including embryos, coleoptiles and seminal roots.

It localises to the cytoplasm. The protein resides in the nucleus. It catalyses the reaction Fe(III)-heme b-[protein] + nitric oxide + H2O = Fe(II)-heme b-[protein] + nitrite + 2 H(+). In terms of biological role, phytoglobin that reduces nitrite to nitric oxide under anoxic conditions (e.g. during flooding or in waterlogged soil). May not function as an oxygen storage or transport protein. Has an unusually high affinity for O(2) through an hexacoordinate heme iron because of a very low dissociation constant. Promotes tolerance to low potassium K(+) conditions. This is Anaerobic nitrite reductase NSHB2 from Oryza sativa subsp. japonica (Rice).